Reading from the N-terminus, the 900-residue chain is Nuclear factor NF-kappa-B p100 subunit (900 aa).

Phosphoserine occurs at positions 23 and 161. Positions 38-343 constitute an RHD domain; the sequence is PYLVIVEQPK…EVQRKRRKAL (306 aa). The Nuclear localization signal motif lies at 337–341; sequence RKRRK. The GRR stretch occupies residues 346–377; sequence FSQPFGGGSHMGGGSGGAAGGYGGAGGGGSLG. The interval 404–435 is disordered; that stretch reads GAQMAATVPSRDSGEEAAEPSAPSRTPQCEPQ. A Phosphothreonine modification is found at T429. ANK repeat units follow at residues 487–519, 526–555, 559–591, 599–628, 633–663, and 667–696; these read NGDT…DLGV, LHQT…DPAL, HGDS…AVPQ, EGLY…EVEA, GGRT…NVNA, and AGNT…DIHA. The interval 698–734 is disordered; it reads NEEPLCPLPSPPTSDSDSDSEGPEKDTRSSFRGHTPL. Phosphoserine occurs at positions 713, 715, and 717. The ANK 7 repeat unit spans residues 729–758; the sequence is RGHTPLDLTCSTKVKTLLLNAAQNTMEPPL. A Death domain is found at 764–851; that stretch reads AGPGLSLGDT…EGVRLLRGPE (88 aa). S812 is modified (phosphoserine). The span at 849–866 shows a compositional bias: basic and acidic residues; sequence GPETRDKLPSTAEVKEDS. Positions 849–900 are disordered; the sequence is GPETRDKLPSTAEVKEDSAYGSQSVEQEAEKLGPPPEPPGGLCHGHPQPQVH. K855 is covalently cross-linked (Glycyl lysine isopeptide (Lys-Gly) (interchain with G-Cter in ubiquitin)). A phosphoserine; by MAP3K14 mark is found at S866 and S870. The segment covering 888 to 900 has biased composition (low complexity); that stretch reads GGLCHGHPQPQVH.

Component of the NF-kappa-B RelB-p52 complex. Homodimer; component of the NF-kappa-B p52-p52 complex. Component of the NF-kappa-B p65-p52 complex. Component of the NF-kappa-B p52-c-Rel complex. NFKB2/p52 interacts with NFKBIE. Component of a complex consisting of the NF-kappa-B p50-p50 homodimer and BCL3. Directly interacts with MEN1. In terms of processing, while translation occurs, the particular unfolded structure after the GRR repeat promotes the generation of p52 making it an acceptable substrate for the proteasome. This process is known as cotranslational processing. The processed form is active and the unprocessed form acts as an inhibitor (I kappa B-like), being able to form cytosolic complexes with NF-kappa B, trapping it in the cytoplasm. Complete folding of the region downstream of the GRR repeat precludes processing. Subsequent to MAP3K14-dependent serine phosphorylation, p100 polyubiquitination occurs then triggering its proteasome-dependent processing. Post-translationally, constitutive processing is tightly suppressed by its C-terminal processing inhibitory domain, named PID, which contains the death domain. In terms of processing, ubiquitinated by TRIM55; leading to processing by VCP and subsequent ubiquitin-dependent protein degradation by the proteasome.

Its subcellular location is the nucleus. The protein resides in the cytoplasm. NF-kappa-B is a pleiotropic transcription factor present in almost all cell types and is the endpoint of a series of signal transduction events that are initiated by a vast array of stimuli related to many biological processes such as inflammation, immunity, differentiation, cell growth, tumorigenesis and apoptosis. NF-kappa-B is a homo- or heterodimeric complex formed by the Rel-like domain-containing proteins RELA/p65, RELB, NFKB1/p105, NFKB1/p50, REL and NFKB2/p52. The dimers bind at kappa-B sites in the DNA of their target genes and the individual dimers have distinct preferences for different kappa-B sites that they can bind with distinguishable affinity and specificity. Different dimer combinations act as transcriptional activators or repressors, respectively. NF-kappa-B is controlled by various mechanisms of post-translational modification and subcellular compartmentalization as well as by interactions with other cofactors or corepressors. NF-kappa-B complexes are held in the cytoplasm in an inactive state complexed with members of the NF-kappa-B inhibitor (I-kappa-B) family. In a conventional activation pathway, I-kappa-B is phosphorylated by I-kappa-B kinases (IKKs) in response to different activators, subsequently degraded thus liberating the active NF-kappa-B complex which translocates to the nucleus. In a non-canonical activation pathway, the MAP3K14-activated CHUK/IKKA homodimer phosphorylates NFKB2/p100 associated with RelB, inducing its proteolytic processing to NFKB2/p52 and the formation of NF-kappa-B RelB-p52 complexes. The NF-kappa-B heterodimeric RelB-p52 complex is a transcriptional activator. The NF-kappa-B p52-p52 homodimer is a transcriptional repressor. NFKB2 appears to have dual functions such as cytoplasmic retention of attached NF-kappa-B proteins by p100 and generation of p52 by a cotranslational processing. The proteasome-mediated process ensures the production of both p52 and p100 and preserves their independent function. p52 binds to the kappa-B consensus sequence 5'-GGRNNYYCC-3', located in the enhancer region of genes involved in immune response and acute phase reactions. p52 and p100 are respectively the minor and major form; the processing of p100 being relatively poor. Isoform p49 is a subunit of the NF-kappa-B protein complex, which stimulates the HIV enhancer in synergy with p65. In concert with RELB, regulates the circadian clock by repressing the transcriptional activator activity of the CLOCK-BMAL1 heterodimer. The protein is Nuclear factor NF-kappa-B p100 subunit (NFKB2) of Homo sapiens (Human).